Here is a 337-residue protein sequence, read N- to C-terminus: Fructose-1,6-bisphosphatase class 1 (337 aa).

Positions 92, 114, 116, and 117 each coordinate Mg(2+). Substrate-binding positions include 117 to 120 (DGSS), Asn209, and Lys275. A Mg(2+)-binding site is contributed by Glu281.

This sequence belongs to the FBPase class 1 family. In terms of assembly, homotetramer. It depends on Mg(2+) as a cofactor.

It is found in the cytoplasm. It catalyses the reaction beta-D-fructose 1,6-bisphosphate + H2O = beta-D-fructose 6-phosphate + phosphate. It participates in carbohydrate biosynthesis; gluconeogenesis. The polypeptide is Fructose-1,6-bisphosphatase class 1 (Thiobacillus denitrificans (strain ATCC 25259 / T1)).